Reading from the N-terminus, the 1100-residue chain is Sorbin and SH3 domain-containing protein 2 (1100 aa).

Phosphoserine is present on residues Y13, S14, H27, G28, S30, and S43. The segment covering 30-52 (SLDSTDTYPQHAQSLDGTTSSSI) has biased composition (polar residues). Residues 30 to 57 (SLDSTDTYPQHAQSLDGTTSSSIPLYRS) are disordered. Positions 66–127 (VIKAPHYPGI…YNTPYTYNAG (62 aa)) constitute a SoHo domain. Over residues 134 to 147 (SAQSHPAAKTQTYR) the composition is skewed to polar residues. The disordered stretch occupies residues 134-311 (SAQSHPAAKT…SPSRAKGGDD (178 aa)). H153 carries the post-translational modification Alanine amide. A phosphoserine mark is found at S154 and S157. Positions 167 to 180 (PVPPPHVPPPVPPL) are enriched in pro residues. Over residues 181–217 (RPRDRSSTEKHDWDPPDRKVDTRKFRSEPRSIFEYEP) the composition is skewed to basic and acidic residues. Residues S234 and I236 each carry the phosphothreonine modification. S239, S245, S248, K258, S259, and E260 each carry phosphoserine. T277, G280, and V282 each carry phosphothreonine. Residue S287 is modified to Phosphoserine. Positions 287 to 304 (SSTTLTKSFTSSSPSSPS) are enriched in low complexity. Phosphothreonine is present on T292. A phosphoserine mark is found at F295, S297, S298, S299, S301, S302, S304, A306, D311, and P316. Phosphothreonine is present on residues S320, S322, and G326. A phosphoserine mark is found at H341, V344, and R346. E366 bears the Phosphothreonine mark. A phosphoserine mark is found at S381 and S383. 2 positions are modified to phosphothreonine: D413 and K415. Phosphoserine is present on residues R437 and R439. Position 459 is a phosphothreonine (I459). 5 positions are modified to phosphoserine: K474, S494, S497, S550, and S750. The segment at 807-866 (RMPRSASFQDVDTANSSCHHQDRGGALQDRESPRSYSSTLTDMGRSAPRERRGTPEKEKL) is disordered. A compositionally biased stretch (polar residues) spans 812–824 (ASFQDVDTANSSC). Positions 825–839 (HHQDRGGALQDRESP) are enriched in basic and acidic residues. A Phosphoserine modification is found at S843. A compositionally biased stretch (basic and acidic residues) spans 853–866 (APRERRGTPEKEKL). SH3 domains lie at 863-922 (KEKL…KLTP) and 938-999 (GEIG…VVKK). Residues S1017 and S1023 each carry the phosphoserine modification. Positions 1041–1100 (GGGEPFQALYNYTPRNEDELELRESDVIDVMEKCDDGWFVGTSRRTKFFGTFPGNYVKRL) constitute an SH3 3 domain.

Interacts with ABL, CBL, DNM1, DNM2, FLOT1, AFDN, PTK2B/PYK2, SAPAP, SPTAN1, SYNJ1, SYNJ2, VCL/vinculin and WASF. Interacts with ABL1/c-Abl, ABL2/v-Abl/Arg, ACTN, CBL and PALLD. Interacts with PTPN12 and WASF1 via its SH3 domains; this interaction may mediate the partial PTPN12 and WASF1 translocation to focal adhesion sites. In terms of processing, ubiquitinated by CBL. Post-translationally, dephosphorylated by PTPN12. As to expression, abundantly expressed in heart. In cardiac muscle cells, located in the Z-disks of sarcomere. Also found, but to a lower extent, in small and large intestine, pancreas, thymus, colon, spleen, prostate, testis, brain, ovary and epithelial cells. In the pancreas, mainly expressed in acinar cells, duct cells and all cell types in islets (at protein level). Tends to be down-regulated in pancreatic adenocarcinomas ans metastases.

It is found in the cytoplasm. The protein localises to the perinuclear region. It localises to the apical cell membrane. The protein resides in the cell junction. Its subcellular location is the focal adhesion. It is found in the cell projection. The protein localises to the lamellipodium. Its function is as follows. Adapter protein that plays a role in the assembling of signaling complexes, being a link between ABL kinases and actin cytoskeleton. Can form complex with ABL1 and CBL, thus promoting ubiquitination and degradation of ABL1. May play a role in the regulation of pancreatic cell adhesion, possibly by acting on WASF1 phosphorylation, enhancing phosphorylation by ABL1, as well as dephosphorylation by PTPN12. Isoform 6 increases water and sodium absorption in the intestine and gall-bladder. This chain is Sorbin and SH3 domain-containing protein 2 (SORBS2), found in Homo sapiens (Human).